A 418-amino-acid polypeptide reads, in one-letter code: MALVLHAGSGNKNAFKALIAAEYSGVKVELVKNFQMGVSNKTPEFLKMNPIGKIPVLETPDGPVFESNAIARYVTRSKADNPLYGSSLIEYAHIEQWNDFSATEVDANIGKWLYPRLGIAPYVAVSEEAAIAALKRSLGALNTHLASNTYLVGHSVTLADIVMTCNLYMGFARIMTKSFTSEFPHVERYFWTMVNQPNFKKVLGDVKQAESVPPVQKKAPPPKEQKPKEAKKEAPKEAPKPKAVEKPEEEEEAPKPKPKNPLDLLPPSKMILDEWKRLYSNTKTNFREVAIKGFWDMYDPEGYSLWFCDYKYNDENTVSFVTMNKVGGFLQRMDLCRKYAFGKMLVIGSEPPFKVKGLWLFRGPEIPKFVMDEVYDMELYEWTKVDISDEAQKERVSAMIEDLEPFEGESLLDAKCFK.

The GST N-terminal domain occupies 1-82; the sequence is MALVLHAGSG…YVTRSKADNP (82 aa). The 129-residue stretch at 87–215 folds into the GST C-terminal domain; sequence SLIEYAHIEQ…VKQAESVPPV (129 aa). The disordered stretch occupies residues 210–265; it reads ESVPPVQKKAPPPKEQKPKEAKKEAPKEAPKPKAVEKPEEEEEAPKPKPKNPLDLL. A compositionally biased stretch (basic and acidic residues) spans 221-246; the sequence is PPKEQKPKEAKKEAPKEAPKPKAVEK. The EF-1-gamma C-terminal domain occupies 258–418; the sequence is PKNPLDLLPP…ESLLDAKCFK (161 aa).

As to quaternary structure, EF-1 is composed of four subunits: alpha, beta, delta, and gamma.

In terms of biological role, probably plays a role in anchoring the complex to other cellular components. This Oryza sativa subsp. japonica (Rice) protein is Elongation factor 1-gamma 2.